The chain runs to 220 residues: MEQGDKQATYNELETEQPVSKEGADSQPEDEAIGAASEHADAQAGENPEAASTTADPAEQTSVEAEELAKAKAQVAELEEKLAEMEKRYLRLYADFENFRRRARQEMEAAEKYRAQSLASDLLPVLDNFERALKIETENEQAKSILQGVEMVYRSLLDALRKEGVEVIEAVGKPFDPHLHQAVMQTDEGGYEPNTVVEELQKGYKLKDRILRPAMVKVSQ.

2 stretches are compositionally biased toward polar residues: residues 1–12 (MEQGDKQATYNE) and 50–63 (AAST…QTSV). The disordered stretch occupies residues 1–67 (MEQGDKQATY…AEQTSVEAEE (67 aa)).

This sequence belongs to the GrpE family. Homodimer.

Its subcellular location is the cytoplasm. In terms of biological role, participates actively in the response to hyperosmotic and heat shock by preventing the aggregation of stress-denatured proteins, in association with DnaK and GrpE. It is the nucleotide exchange factor for DnaK and may function as a thermosensor. Unfolded proteins bind initially to DnaJ; upon interaction with the DnaJ-bound protein, DnaK hydrolyzes its bound ATP, resulting in the formation of a stable complex. GrpE releases ADP from DnaK; ATP binding to DnaK triggers the release of the substrate protein, thus completing the reaction cycle. Several rounds of ATP-dependent interactions between DnaJ, DnaK and GrpE are required for fully efficient folding. This is Protein GrpE from Geobacillus thermodenitrificans (strain NG80-2).